The sequence spans 256 residues: Small ribosomal subunit protein eS1 (256 aa).

The residue at position 2 (alanine 2) is an N-acetylalanine; partial.

This sequence belongs to the eukaryotic ribosomal protein eS1 family. In terms of assembly, component of the small ribosomal subunit. Mature ribosomes consist of a small (40S) and a large (60S) subunit. The 40S subunit contains about 33 different proteins and 1 molecule of RNA (18S). The 60S subunit contains about 49 different proteins and 3 molecules of RNA (25S, 5.8S and 5S).

The protein resides in the cytoplasm. In Meyerozyma guilliermondii (strain ATCC 6260 / CBS 566 / DSM 6381 / JCM 1539 / NBRC 10279 / NRRL Y-324) (Yeast), this protein is Small ribosomal subunit protein eS1.